Consider the following 1651-residue polypeptide: Putative serine/threonine-protein kinase/receptor R818 (1651 aa).

Residues 1–19 (MKSIGIFVVALWLTHFCDG) form the signal peptide. N-linked (GlcNAc...) asparagine; by host glycans are attached at residues Asn-111, Asn-135, Asn-190, Asn-236, Asn-275, Asn-276, Asn-287, Asn-452, Asn-455, Asn-477, Asn-495, Asn-540, Asn-596, and Asn-722. The helical transmembrane segment at 749-769 (IILAIVIPVSFVICCIIIVLV) threads the bilayer. One can recognise a Protein kinase 1 domain in the interval 793–1057 (LDFMESLGSG…EIMTKLSTLI (265 aa)). ATP is bound by residues 799 to 807 (LGSGGSGEV) and Lys-820. The active-site Proton acceptor is Asp-915. Positions 1089 to 1115 (IHNNDETKNSFGSTTYGSNTISSSSNT) are disordered. Over residues 1100-1115 (GSTTYGSNTISSSSNT) the composition is skewed to low complexity. The Guanylate cyclase domain occupies 1135–1278 (IIVFTDIISA…VTVNIAAKIT (144 aa)). The 252-residue stretch at 1394–1645 (IQIGKQIGVG…DVIMGLNDML (252 aa)) folds into the Protein kinase 2 domain. Residues 1400–1408 (IGVGSYGIV) and Lys-1421 each bind ATP. Residue Asp-1515 is the Proton acceptor of the active site.

The protein localises to the membrane. The catalysed reaction is L-seryl-[protein] + ATP = O-phospho-L-seryl-[protein] + ADP + H(+). It carries out the reaction L-threonyl-[protein] + ATP = O-phospho-L-threonyl-[protein] + ADP + H(+). This Acanthamoeba polyphaga mimivirus (APMV) protein is Putative serine/threonine-protein kinase/receptor R818.